Here is a 2135-residue protein sequence, read N- to C-terminus: Nonribosomal peptide synthetase gliP (2135 aa).

The segment at 34–424 (TYTELDVASS…LPADVEEPLR (391 aa)) is adenylation 1. The 76-residue stretch at 519-594 (TEREQVIAEC…GILPYARDLA (76 aa)) folds into the Carrier 1 domain. Serine 555 carries the O-(pantetheine 4'-phosphoryl)serine modification. The interval 663–913 (AEHICNAWRQ…MATLPLVCRI (251 aa)) is condensation 1. The interval 1078 to 1458 (YRELDQKSNA…YQEEPRLTQA (381 aa)) is adenylation 2. The Carrier 2 domain occupies 1544–1622 (ASIADGIATL…EQVELVRRKR (79 aa)). The residue at position 1582 (serine 1582) is an O-(pantetheine 4'-phosphoryl)serine. The segment at 1642–1905 (SPLERQTWFQ…FLDRLPLRFK (264 aa)) is condensation 2. One can recognise a Carrier 3 domain in the interval 2061 to 2134 (RRLVGILQRE…DLAQRLYRQV (74 aa)). Serine 2095 is modified (O-(pantetheine 4'-phosphoryl)serine).

Belongs to the NRP synthetase family.

It functions in the pathway mycotoxin biosynthesis. In terms of biological role, nonribosomal peptide synthetase; part of the gene cluster that mediates the biosynthesis of gliotoxin, a member of the epipolythiodioxopiperazine (ETP) class of toxins characterized by a disulfide-bridged cyclic dipeptide. The first step in gliotoxin biosynthesis is the condensation of serine and phenylalanine to form the cyclo-L-phenylalanyl-L-serine diketopiperazine (DKP) by the NRPS gliP. GliP is also able to produce the DKP cyclo-L-tryptophanyl-L-serine, suggesting that the substrate specificity of the first adenylation (A) domain in gliP is sufficiently relaxed to accommodate both L-Phe and L-Trp. The cytochrome P450 monooxygenase gliC has been shown to catalyze the subsequent hydroxylation of the alpha-carbon of L-Phe in cyclo-L-phenylalanyl-L-serine whereas the second cytochrome P450 enzyme, gliF, is presumably involved in the modification of the DKP side chain. The glutathione S-transferase (GST) gliG then forms a bis-glutathionylated biosynthetic intermediate which is responsible for the sulfurization of gliotoxin. This bis-glutathionylated intermediate is subsequently processed by the gamma-glutamyl cyclotransferase gliK to remove both gamma-glutamyl moieties. Subsequent processing via gliI yields a biosynthetic intermediate, which is N-methylated via the N-methyltransferase gliN, before the gliotoxin oxidoreductase gliT-mediated disulfide bridge closure. GliN-mediated amide methylation confers stability to ETP, damping the spontaneous formation of tri- and tetrasulfides. Intracellular dithiol gliotoxin oxidized by gliT is subsequently effluxed by gliA. Gliotoxin contributes to pathogenesis during invasive aspergillosis. In macrophages and neutrophils, gliotoxin showed inhibition of various different cell functions including cytokine production, antigen presentation, phagocytosis, and production of reactive oxygen species. This chain is Nonribosomal peptide synthetase gliP, found in Aspergillus fumigatus (strain ATCC MYA-4609 / CBS 101355 / FGSC A1100 / Af293) (Neosartorya fumigata).